We begin with the raw amino-acid sequence, 123 residues long: uncharacterized protein (123 aa).

The segment at 100–123 (NKQPKTTHHFSTNSSEYKSRKSKH) is disordered.

This is an uncharacterized protein from Acanthamoeba polyphaga mimivirus (APMV).